A 294-amino-acid polypeptide reads, in one-letter code: Urease accessory protein UreD 1 (294 aa).

A disordered region spans residues 1 to 22 (MALSLDGLPEKPAPAEAPSPPV). Residues 11-21 (KPAPAEAPSPP) are compositionally biased toward pro residues.

This sequence belongs to the UreD family. In terms of assembly, ureD, UreF and UreG form a complex that acts as a GTP-hydrolysis-dependent molecular chaperone, activating the urease apoprotein by helping to assemble the nickel containing metallocenter of UreC. The UreE protein probably delivers the nickel.

The protein resides in the cytoplasm. Functionally, required for maturation of urease via the functional incorporation of the urease nickel metallocenter. The sequence is that of Urease accessory protein UreD 1 from Methylorubrum extorquens (strain PA1) (Methylobacterium extorquens).